Here is a 160-residue protein sequence, read N- to C-terminus: Thialysine N-epsilon-acetyltransferase (160 aa).

In terms of domain architecture, N-acetyltransferase spans 4-159 (FEIVTVTPDH…DGAAINKFAD (156 aa)). Acetyl-CoA contacts are provided by residues 84–86 (LYI), 92–97 (RMGLAR), 123–126 (NKNA), and 130–133 (YDTV).

Belongs to the acetyltransferase family. Homodimer.

The enzyme catalyses S-(2-aminoethyl)-L-cysteine + acetyl-CoA = S-(2-acetamidoethyl)-L-cysteine + CoA + H(+). It catalyses the reaction O-(2-aminoethyl)-L-serine + acetyl-CoA = O-(2-acetamidoethyl)-L-serine + CoA + H(+). It carries out the reaction S-(2-aminoethyl)-homocysteine + acetyl-CoA = S-(2-acetamidoethyl)-homocysteine + CoA + H(+). In terms of biological role, catalyzes the N-acetylation of the amino acid thialysine (S-(2-aminoethyl)-L-cysteine), a L-lysine analog with the 4-methylene group substituted with a sulfur. Substrate specificity: thialysine &gt; O-(2-aminoethyl)-L-serine &gt; S-(2-aminoethyl)-D,L-homocysteine. Does not act on polyamines, such as spermidine and spermine, nor on diamines putrescine and cadaverine. This chain is Thialysine N-epsilon-acetyltransferase, found in Caenorhabditis elegans.